A 244-amino-acid chain; its full sequence is 2-C-methyl-D-erythritol 4-phosphate cytidylyltransferase (244 aa).

Belongs to the IspD/TarI cytidylyltransferase family. IspD subfamily.

The catalysed reaction is 2-C-methyl-D-erythritol 4-phosphate + CTP + H(+) = 4-CDP-2-C-methyl-D-erythritol + diphosphate. The protein operates within isoprenoid biosynthesis; isopentenyl diphosphate biosynthesis via DXP pathway; isopentenyl diphosphate from 1-deoxy-D-xylulose 5-phosphate: step 2/6. Functionally, catalyzes the formation of 4-diphosphocytidyl-2-C-methyl-D-erythritol from CTP and 2-C-methyl-D-erythritol 4-phosphate (MEP). The chain is 2-C-methyl-D-erythritol 4-phosphate cytidylyltransferase from Prosthecochloris aestuarii (strain DSM 271 / SK 413).